A 203-amino-acid chain; its full sequence is Holliday junction branch migration complex subunit RuvA (203 aa).

The interval 1–63 (MIGQLSGKVD…EEHIHLYGFL (63 aa)) is domain I. Residues 64–142 (NLEEKIFFNL…KISSGSAIIK (79 aa)) form a domain II region. A flexible linker region spans residues 143-149 (ESLNIKH). Residues 150–203 (ITPVASNEVIKALVNLGFSRFEAQNAVQGIITQNPEISIDELIKTALKNRNSNF) are domain III.

This sequence belongs to the RuvA family. In terms of assembly, homotetramer. Forms an RuvA(8)-RuvB(12)-Holliday junction (HJ) complex. HJ DNA is sandwiched between 2 RuvA tetramers; dsDNA enters through RuvA and exits via RuvB. An RuvB hexamer assembles on each DNA strand where it exits the tetramer. Each RuvB hexamer is contacted by two RuvA subunits (via domain III) on 2 adjacent RuvB subunits; this complex drives branch migration. In the full resolvosome a probable DNA-RuvA(4)-RuvB(12)-RuvC(2) complex forms which resolves the HJ.

Its subcellular location is the cytoplasm. The RuvA-RuvB-RuvC complex processes Holliday junction (HJ) DNA during genetic recombination and DNA repair, while the RuvA-RuvB complex plays an important role in the rescue of blocked DNA replication forks via replication fork reversal (RFR). RuvA specifically binds to HJ cruciform DNA, conferring on it an open structure. The RuvB hexamer acts as an ATP-dependent pump, pulling dsDNA into and through the RuvAB complex. HJ branch migration allows RuvC to scan DNA until it finds its consensus sequence, where it cleaves and resolves the cruciform DNA. The protein is Holliday junction branch migration complex subunit RuvA of Rickettsia africae (strain ESF-5).